The primary structure comprises 427 residues: 3-phosphoshikimate 1-carboxyvinyltransferase (427 aa).

3 residues coordinate 3-phosphoshikimate: Lys-22, Ser-23, and Arg-27. Lys-22 is a phosphoenolpyruvate binding site. 2 residues coordinate phosphoenolpyruvate: Gly-96 and Arg-124. 3-phosphoshikimate contacts are provided by Ser-170, Ser-171, Gln-172, Ser-198, Asp-314, Asn-337, and Lys-341. Position 172 (Gln-172) interacts with phosphoenolpyruvate. Asp-314 serves as the catalytic Proton acceptor. 3 residues coordinate phosphoenolpyruvate: Arg-345, Arg-387, and Lys-412.

It belongs to the EPSP synthase family. In terms of assembly, monomer.

It localises to the cytoplasm. The catalysed reaction is 3-phosphoshikimate + phosphoenolpyruvate = 5-O-(1-carboxyvinyl)-3-phosphoshikimate + phosphate. It participates in metabolic intermediate biosynthesis; chorismate biosynthesis; chorismate from D-erythrose 4-phosphate and phosphoenolpyruvate: step 6/7. Functionally, catalyzes the transfer of the enolpyruvyl moiety of phosphoenolpyruvate (PEP) to the 5-hydroxyl of shikimate-3-phosphate (S3P) to produce enolpyruvyl shikimate-3-phosphate and inorganic phosphate. This Tolumonas auensis (strain DSM 9187 / NBRC 110442 / TA 4) protein is 3-phosphoshikimate 1-carboxyvinyltransferase.